Reading from the N-terminus, the 549-residue chain is Cytoplasmic trehalase (549 aa).

Residues Arg168, 175 to 176 (WD), Asn212, 221 to 223 (RSQ), 292 to 294 (RDE), and Gly324 contribute to the substrate site. Active-site proton donor/acceptor residues include Asp326 and Glu509. Glu525 serves as a coordination point for substrate.

The protein belongs to the glycosyl hydrolase 37 family. Monomer.

The protein resides in the cytoplasm. It carries out the reaction alpha,alpha-trehalose + H2O = alpha-D-glucose + beta-D-glucose. It functions in the pathway glycan degradation; trehalose degradation; D-glucose from alpha,alpha-trehalose: step 1/1. Its function is as follows. Hydrolyzes trehalose to glucose. Could be involved, in cells returning to low osmolarity conditions, in the utilization of the accumulated cytoplasmic trehalose, which was synthesized in response to high osmolarity. The protein is Cytoplasmic trehalase of Shigella boydii serotype 4 (strain Sb227).